The chain runs to 149 residues: Arginine repressor (149 aa).

It belongs to the ArgR family.

The protein localises to the cytoplasm. It functions in the pathway amino-acid biosynthesis; L-arginine biosynthesis [regulation]. Functionally, regulates arginine biosynthesis genes. The sequence is that of Arginine repressor from Chlorobium phaeobacteroides (strain DSM 266 / SMG 266 / 2430).